The primary structure comprises 147 residues: Calmodulin (147 aa).

EF-hand domains lie at 8 to 43, 44 to 79, 81 to 116, and 120 to 147; these read EQIA…LGLS, PSEA…QLKC, DSEQ…IGEK, and AEVD…LLSK. Residues aspartate 21, aspartate 23, serine 25, serine 27, glutamate 32, aspartate 57, aspartate 59, asparagine 61, glutamate 68, aspartate 94, asparagine 96, aspartate 98, and glutamate 105 each coordinate Ca(2+).

The protein belongs to the calmodulin family.

In terms of biological role, calmodulin mediates the control of a large number of enzymes, ion channels and other proteins by Ca(2+). Among the enzymes to be stimulated by the calmodulin-Ca(2+) complex are a number of protein kinases and phosphatases. This is Calmodulin (CMD1) from Kluyveromyces lactis (strain ATCC 8585 / CBS 2359 / DSM 70799 / NBRC 1267 / NRRL Y-1140 / WM37) (Yeast).